A 70-amino-acid polypeptide reads, in one-letter code: Dermaseptin-PH (70 aa).

The N-terminal stretch at 1 to 22 is a signal peptide; the sequence is MDILKKSLFLILFLGVVSLSIC. A propeptide spanning residues 23 to 44 is cleaved from the precursor; the sequence is EEEKRENEEEMEQDDEQSEMKR. Residue Gln-67 is modified to Glutamine amide. A propeptide spanning residues 68–70 is cleaved from the precursor; the sequence is GGQ.

It belongs to the frog skin active peptide (FSAP) family. In terms of tissue distribution, expressed by the skin glands.

It localises to the secreted. It is found in the target cell membrane. Functionally, antimicrobial peptide which inhibits the growth of Gram-negative (MIC=16-64 uM) and Gram-positive bacteria (MIC=32 uM), and pathogenic yeast Candida albicans (MIC=16 uM). Shows a broad-spectrum of anticancer activities against several cancer cell lines. Also shows slight cytotoxicity on human dermal microvascular endothelium cells (IC(50)=4.85 uM). Induces low hemolysis against horse erythrocytes. The chain is Dermaseptin-PH from Pithecopus hypochondrialis (Orange-legged leaf frog).